A 499-amino-acid chain; its full sequence is Probable malate:quinone oxidoreductase (499 aa).

The protein belongs to the MQO family. Requires FAD as cofactor.

It carries out the reaction (S)-malate + a quinone = a quinol + oxaloacetate. Its pathway is carbohydrate metabolism; tricarboxylic acid cycle; oxaloacetate from (S)-malate (quinone route): step 1/1. This Exiguobacterium sp. (strain ATCC BAA-1283 / AT1b) protein is Probable malate:quinone oxidoreductase.